The primary structure comprises 306 residues: Pantothenate kinase (306 aa).

91 to 98 (GSVAVGKS) contributes to the ATP binding site.

Belongs to the prokaryotic pantothenate kinase family.

Its subcellular location is the cytoplasm. It catalyses the reaction (R)-pantothenate + ATP = (R)-4'-phosphopantothenate + ADP + H(+). It participates in cofactor biosynthesis; coenzyme A biosynthesis; CoA from (R)-pantothenate: step 1/5. The chain is Pantothenate kinase from Streptococcus gordonii (strain Challis / ATCC 35105 / BCRC 15272 / CH1 / DL1 / V288).